Consider the following 976-residue polypeptide: MTRTDPPDLLVSTVYQDIKVATPGPASKCSPCERSVARPAEPAPFNKRHCRSFDFLEALDGPAMETLPEPPPPESAVPRARTREAEPRRRARSKSAPRAPPGLTPAPASPPVLPRRGREAQRAARAEASPRREPAYPALRALANELHPIKLQPQRGGPGRVAPLCAAAGRCAPPEPPAGPAPHVRCRLDIKPDDAVLQHATRGSRSCGPTEAAHWARPAPQFHGLTVPGPRHMALSRTPTPSDSYCADPRAFYCDGPLPGPRDYAERRSLPFTTPPGPTQFFYTEEPQGFRGSFAASPGPTFDAYYPRPYPSEELSGPSPRRMGGYYAGEVRTFPIQEPPSRSYYGEAPRAYGLPYGPRYVPEEPRAHSTARPFYTEDFGRYRERDVLARTYPHPRSSPAWADWGPRPYRTLQVVPPSDPDPLLASWHGGTGTSPPRLATDSRHYSRSWDNILAPGPRREDPLGRGRSYENLLGREVREPRGVSPEGRRPPVVVNLSTSPRRYAALSLSETSLTEKGRAGEGLGRNWYVTPEITITDNDLRATERPSARAWELPGGRTRPPPHAAPDGPTSGRQRSLEQLDELITDLVIDSRPTAGQASEPAADCLGPQLRRLLDSRPAGSGAPALAPPRSPPASAGSAEEPAAPGEAADASPEPSADEDDLMTCSNARCRRTETMFNACLYFKSCHSCYTYYCSRLCRREDWDAHKARCVYGRVGSVCRHVLQFCRDSGPVHRAFSRIARVGFLSRGRGVLFLGFPSPGSADNFLRFGLEGLLLSPTYLSLRELATHAAPLGSYARELAAAGRLYEPAECFLLSVSVAVGPGTAPPGTPALPAPAPRSHGPTVRKFAKVALAAGSPARPPPARSREPDMETLILTPPPGTAGLDQDGEAGRRAREVAFIHIQRELRLRGVFLRHEFPRVYEQLCEFVEANRRFTPTTIYPTDRRTGRPFMCMIMAASEPRALDWVASANLLDDIM.

The disordered stretch occupies residues 21-49 (ATPGPASKCSPCERSVARPAEPAPFNKRH). Serine 52 is subject to Phosphoserine. 3 disordered regions span residues 61-136 (GPAM…EPAY), 220-242 (PQFH…PTPS), and 264-294 (YAER…RGSF). Over residues 98-113 (RAPPGLTPAPASPPVL) the composition is skewed to pro residues. Basic and acidic residues predominate over residues 116–134 (RGREAQRAARAEASPRREP). A Phosphoserine modification is found at serine 129. Omega-N-methylarginine is present on arginine 322. Residues 412–443 (LQVVPPSDPDPLLASWHGGTGTSPPRLATDSR) are disordered. Phosphoserine is present on residues serine 468, serine 509, and serine 512. 2 disordered regions span residues 539–574 (DLRA…SGRQ) and 614–660 (LDSR…ADED). Low complexity-rich tracts occupy residues 616-625 (SRPAGSGAPA) and 633-655 (PASA…SPEP). Asymmetric dimethylarginine; alternate is present on arginine 749. Residue arginine 749 is modified to Omega-N-methylarginine; alternate. Positions 855–888 (GSPARPPPARSREPDMETLILTPPPGTAGLDQDG) are disordered.

It localises to the apical cell membrane. The protein resides in the cell projection. It is found in the cilium. The protein localises to the cell junction. Its subcellular location is the adherens junction. May be involved in the control of adherens junction integrity. This Homo sapiens (Human) protein is Apical junction component 1 homolog.